We begin with the raw amino-acid sequence, 237 residues long: Concanavalin-A (237 aa).

Mn(2+) contacts are provided by glutamate 8 and aspartate 10. Aspartate 10, tyrosine 12, asparagine 14, and aspartate 19 together coordinate Ca(2+). Position 12 (tyrosine 12) interacts with a carbohydrate. Aspartate 19 and histidine 24 together coordinate Mn(2+). 99 to 100 (LY) serves as a coordination point for a carbohydrate. Aspartate 208 serves as a coordination point for Ca(2+). Arginine 228 contributes to the a carbohydrate binding site.

Belongs to the leguminous lectin family. Homotetramer.

In terms of biological role, glucose/D-mannose specific lectin. The protein is Concanavalin-A of Canavalia lineata (Beach bean).